The sequence spans 373 residues: Glutamate 5-kinase (373 aa).

Lys12 contributes to the ATP binding site. The substrate site is built by Ser52, Asp139, and Asn154. 216–222 (TGGMVTK) lines the ATP pocket. The 79-residue stretch at 281-359 (RGNICIDDGA…DEINTVLAGN (79 aa)) folds into the PUA domain.

This sequence belongs to the glutamate 5-kinase family.

Its subcellular location is the cytoplasm. The catalysed reaction is L-glutamate + ATP = L-glutamyl 5-phosphate + ADP. It functions in the pathway amino-acid biosynthesis; L-proline biosynthesis; L-glutamate 5-semialdehyde from L-glutamate: step 1/2. Functionally, catalyzes the transfer of a phosphate group to glutamate to form L-glutamate 5-phosphate. The chain is Glutamate 5-kinase from Dehalococcoides mccartyi (strain ATCC BAA-2266 / KCTC 15142 / 195) (Dehalococcoides ethenogenes (strain 195)).